The chain runs to 160 residues: Cytochrome b6-f complex subunit 4 (160 aa).

Transmembrane regions (helical) follow at residues 36–56, 95–115, and 131–151; these read LLYM…GLSV, LLGV…PFIE, and ILFL…TFPI.

The protein belongs to the cytochrome b family. PetD subfamily. In terms of assembly, the 4 large subunits of the cytochrome b6-f complex are cytochrome b6, subunit IV (17 kDa polypeptide, petD), cytochrome f and the Rieske protein, while the 4 small subunits are petG, petL, petM and petN. The complex functions as a dimer. The N-terminus is blocked.

The protein localises to the plastid. The protein resides in the chloroplast thylakoid membrane. In terms of biological role, component of the cytochrome b6-f complex, which mediates electron transfer between photosystem II (PSII) and photosystem I (PSI), cyclic electron flow around PSI, and state transitions. In Chlamydomonas reinhardtii (Chlamydomonas smithii), this protein is Cytochrome b6-f complex subunit 4.